Here is a 301-residue protein sequence, read N- to C-terminus: Negative regulator of the PHO system (301 aa).

In terms of domain architecture, Protein kinase spans 7-297 (FKQLERLGNG…AQQALSHPLF (291 aa)). Residues 13 to 21 (LGNGTYATV) and Lys-36 contribute to the ATP site. The active-site Proton acceptor is the Asp-133.

Belongs to the protein kinase superfamily. CMGC Ser/Thr protein kinase family. CDC2/CDKX subfamily. Interacts with a number of cyclins.

The enzyme catalyses L-seryl-[protein] + ATP = O-phospho-L-seryl-[protein] + ADP + H(+). It carries out the reaction L-threonyl-[protein] + ATP = O-phospho-L-threonyl-[protein] + ADP + H(+). In terms of biological role, when phosphate concentrations are high it phosphorylates the PHO4 transcription factor thus establishing repression. This Eremothecium gossypii (strain ATCC 10895 / CBS 109.51 / FGSC 9923 / NRRL Y-1056) (Yeast) protein is Negative regulator of the PHO system (PHO85).